We begin with the raw amino-acid sequence, 261 residues long: Putative hydro-lyase Sfum_3393 (261 aa).

It belongs to the D-glutamate cyclase family.

This chain is Putative hydro-lyase Sfum_3393, found in Syntrophobacter fumaroxidans (strain DSM 10017 / MPOB).